A 151-amino-acid chain; its full sequence is uncharacterized protein (151 aa).

The first 32 residues, 1–32, serve as a signal peptide directing secretion; sequence MEEAEKAKRRSIELLNETRNCAYSSFVALAEA. The chain crosses the membrane as a helical span at residues 45-67; that stretch reads AIGFAGGISGSGHICGALWGSIA.

It is found in the membrane. This is an uncharacterized protein from Archaeoglobus fulgidus (strain ATCC 49558 / DSM 4304 / JCM 9628 / NBRC 100126 / VC-16).